The chain runs to 599 residues: Sulfite reductase [NADPH] flavoprotein alpha-component (599 aa).

One can recognise a Flavodoxin-like domain in the interval 64-202; it reads ITIISASQTG…AASEWRARVV (139 aa). Residues 70–75, 117–120, and 153–162 contribute to the FMN site; these read SQTGNA, STQG, and LGDSSYEFFC. Residues 234–448 form the FAD-binding FR-type domain; sequence DAPLVASLSV…IEHNDNFRLP (215 aa). FAD-binding positions include Thr322, Ala356, 386 to 389, 404 to 406, Tyr410, and 419 to 422; these read RLYS, TVG, and GGAS. NADP(+) is bound by residues 519 to 520, 525 to 529, and Asp561; these read SR and KVYVQ. Tyr599 lines the FAD pocket.

This sequence belongs to the NADPH-dependent sulphite reductase flavoprotein subunit CysJ family. The protein in the N-terminal section; belongs to the flavodoxin family. It in the C-terminal section; belongs to the flavoprotein pyridine nucleotide cytochrome reductase family. Alpha(8)-beta(8). The alpha component is a flavoprotein, the beta component is a hemoprotein. It depends on FAD as a cofactor. FMN serves as cofactor.

It catalyses the reaction hydrogen sulfide + 3 NADP(+) + 3 H2O = sulfite + 3 NADPH + 4 H(+). Its pathway is sulfur metabolism; hydrogen sulfide biosynthesis; hydrogen sulfide from sulfite (NADPH route): step 1/1. Functionally, component of the sulfite reductase complex that catalyzes the 6-electron reduction of sulfite to sulfide. This is one of several activities required for the biosynthesis of L-cysteine from sulfate. The flavoprotein component catalyzes the electron flow from NADPH -&gt; FAD -&gt; FMN to the hemoprotein component. The chain is Sulfite reductase [NADPH] flavoprotein alpha-component from Shigella dysenteriae serotype 1 (strain Sd197).